We begin with the raw amino-acid sequence, 490 residues long: Betaine aldehyde dehydrogenase (490 aa).

Positions 26, 27, and 93 each coordinate K(+). Position 150–152 (150–152 (GAW)) interacts with NAD(+). The active-site Charge relay system is K162. 176–179 (KPSE) contributes to the NAD(+) binding site. Residue V180 participates in K(+) binding. Position 230–233 (230–233 (GTDT)) interacts with NAD(+). L246 contacts K(+). E252 functions as the Proton acceptor in the catalytic mechanism. NAD(+) contacts are provided by G254, C286, and E387. Catalysis depends on C286, which acts as the Nucleophile. Cysteine sulfenic acid (-SOH) is present on C286. K457 and G460 together coordinate K(+). E464 (charge relay system) is an active-site residue.

It belongs to the aldehyde dehydrogenase family. In terms of assembly, dimer of dimers. The cofactor is K(+).

It catalyses the reaction betaine aldehyde + NAD(+) + H2O = glycine betaine + NADH + 2 H(+). The protein operates within amine and polyamine biosynthesis; betaine biosynthesis via choline pathway; betaine from betaine aldehyde: step 1/1. Involved in the biosynthesis of the osmoprotectant glycine betaine. Catalyzes the irreversible oxidation of betaine aldehyde to the corresponding acid. This chain is Betaine aldehyde dehydrogenase, found in Pseudomonas syringae pv. tomato (strain ATCC BAA-871 / DC3000).